We begin with the raw amino-acid sequence, 186 residues long: Temperature-induced lipocalin-1 (186 aa).

An HPR (Hydrophobic proline-rich) motif is present at residues 90 to 97 (PPFLPIIP). Residues 154 to 174 (KLHKTPQSDTPPESNTAPEDS) are disordered. A compositionally biased stretch (polar residues) spans 158-171 (TPQSDTPPESNTAP).

It belongs to the calycin superfamily. Lipocalin family. As to expression, expressed ubiquitously at similar levels, except in dry seeds (at protein level). Present in seeds.

It localises to the cell membrane. It is found in the cytoplasm. Its subcellular location is the plastid. The protein resides in the chloroplast membrane. Functionally, involved in basal (BT) and acquired thermotolerance (AT), probably by preventing plasma membrane lipids peroxidation induced by severe heat-shock (HS). Lipocalin that confers protection against oxidative stress caused by heat, freezing, paraquat and light. Confers resistance to high salt (NaCl) levels, probably by protecting chloroplasts from ion toxicity via ion homeostasis maintenance. Required for seed longevity by ensuring polyunsaturated lipids integrity. In Arabidopsis thaliana (Mouse-ear cress), this protein is Temperature-induced lipocalin-1.